A 372-amino-acid chain; its full sequence is Meiotic drive suppressor wtf18 (372 aa).

6 consecutive transmembrane segments (helical) span residues F86–V106, A120–F140, V153–V173, D197–V217, C233–L253, and L257–L277.

Belongs to the WTF family. Homomer. Interacts with other proteins that exhibit high sequence similarity.

Its subcellular location is the spore membrane. It is found in the vacuole membrane. In terms of biological role, acts as a suppressor component of the dual wtf meiotic drive system, and can suppress but not confer meiotic drive by compatible poisons. Wtf meiotic drive systems promote unequal transmission of alleles from the parental zygote to progeny spores by encoding a poison and an antidote from the same locus; the poison is trans-acting and forms toxic aggregates in all spores within an ascus, wherease the antidote is spore-specific and targets aggregates for degradation by the vacuole. Meiotic drive by wtf systems therefore lead to poisoning of all progeny that do not inherit the dual poison/antidote allele, or express a compatible antidote. This Schizosaccharomyces pombe (strain 972 / ATCC 24843) (Fission yeast) protein is Meiotic drive suppressor wtf18.